The sequence spans 150 residues: Putative HTH-type transcriptional regulator rrf2-like (150 aa).

Residues 1–139 (MITQKMKYAL…DSLTLEDMLA (139 aa)) enclose the HTH rrf2-type domain.

This chain is Putative HTH-type transcriptional regulator rrf2-like, found in Rhodobacter capsulatus (strain ATCC BAA-309 / NBRC 16581 / SB1003).